The sequence spans 222 residues: MPSLHIFYGGTFDPVHVGHLAIARAAHAALQAPIALIPSADPPHRPTPGSSSMDRLRMLQLAVSKEPGLSADPRELRRAARQNRPSYTVDTLTEVRSELGPKTSIIWLLGADAFVNLSNWKDWQMLPELTHLVVANRPGITLQTQLPPKMATVFNHRWVQDPATLRKTPHGHLWLLNQHPNPSSASKVRAAISAAAHWEADLTPEVAQYIRTHGLYGIHDIN.

This sequence belongs to the NadD family.

It carries out the reaction nicotinate beta-D-ribonucleotide + ATP + H(+) = deamido-NAD(+) + diphosphate. It participates in cofactor biosynthesis; NAD(+) biosynthesis; deamido-NAD(+) from nicotinate D-ribonucleotide: step 1/1. Its function is as follows. Catalyzes the reversible adenylation of nicotinate mononucleotide (NaMN) to nicotinic acid adenine dinucleotide (NaAD). This chain is Probable nicotinate-nucleotide adenylyltransferase, found in Xylella fastidiosa (strain M12).